A 184-amino-acid chain; its full sequence is MTHIAVIDNHGQFTHLEQRALRDLGVDVELVDNTTSPEQLIQTADGLVLSGGPDIDRVGNCPEYLELDIPILGICLGMQLLANELGGSVAAGDYGGYADVDIEILDDTDPLIGSLAPETRVWASHADEVKSVPEGFERTARSDVCRIEAMSNRDQERYGVQWHPEVAHTERGEEVFKNFIARCQ.

A Glutamine amidotransferase type-1 domain is found at 3–184; that stretch reads HIAVIDNHGQ…VFKNFIARCQ (182 aa). Cys75 acts as the Nucleophile in catalysis. Catalysis depends on residues His163 and Glu165.

Heterodimer composed of a glutamine amidotransferase subunit (A) and a GMP-binding subunit (B).

It carries out the reaction XMP + L-glutamine + ATP + H2O = GMP + L-glutamate + AMP + diphosphate + 2 H(+). It functions in the pathway purine metabolism; GMP biosynthesis; GMP from XMP (L-Gln route): step 1/1. In terms of biological role, catalyzes the synthesis of GMP from XMP. This Haloquadratum walsbyi (strain DSM 16790 / HBSQ001) protein is GMP synthase [glutamine-hydrolyzing] subunit A.